Consider the following 382-residue polypeptide: MVRKLGIEEELLLFDPESGEVVPAAPSVLKEFREHGPGRQRARAATDELDQELFRHQLETRTDPVRRAADALDQLVAARRTAGEAARAAGYAAGACGIVPLGGDRSVVSPNDRYRDMVDTYGEIARTGGTCGMHVHVDIGSDEEGVAVVDRIAPWLPVLVALAANSPYVEGRDSGYASWRAQVWARWPSAGPTEQFGSVAGYREVCRMLLDVGAARDPGMLYFDARLSTGQPTVEVRVCDVGTDPAVAVTIGALVRALVETAAEEWADGRPAAHWRAEALRAAHWRASRFGMADSLVHPLARGLRPARSVVAALVEAVEPALAAAGDLELVDVQLERAVNDNGATRQRAAFERTGSVRGVVDDVIARTEASWQDHDSHAGRL.

It belongs to the glutamate--cysteine ligase type 2 family. YbdK subfamily.

The catalysed reaction is L-cysteine + L-glutamate + ATP = gamma-L-glutamyl-L-cysteine + ADP + phosphate + H(+). In terms of biological role, ATP-dependent carboxylate-amine ligase which exhibits weak glutamate--cysteine ligase activity. The protein is Putative glutamate--cysteine ligase 2-1 of Nocardioides sp. (strain ATCC BAA-499 / JS614).